The following is a 158-amino-acid chain: Developmental pluripotency-associated protein 3 (158 aa).

Disordered stretches follow at residues 1–38 and 54–78; these read MDEP…EILQ and SAKP…VENR. Residues 26-35 are compositionally biased toward acidic residues; sequence DEGDSPDDSE. Positions 58–68 are enriched in basic residues; sequence TKYHRRQRVRL.

Its subcellular location is the nucleus. The protein localises to the cytoplasm. In terms of biological role, primordial germ cell (PGCs)-specific protein involved in epigenetic chromatin reprogramming in the zygote following fertilization. In zygotes, DNA demethylation occurs selectively in the paternal pronucleus before the first cell division, while the adjacent maternal pronucleus and certain paternally-imprinted loci are protected from this process. Participates in protection of DNA methylation in the maternal pronucleus by preventing conversion of 5mC to 5hmC: specifically recognizes and binds histone H3 dimethylated at 'Lys-9' (H3K9me2) on maternal genome, and protects maternal genome from TET3-mediated conversion to 5hmC and subsequent DNA demethylation. Does not bind paternal chromatin, which is mainly packed into protamine and does not contain much H3K9me2 mark. Also protects imprinted loci that are marked with H3K9me2 in mature sperm from DNA demethylation in early embryogenesis. May be important for the totipotent/pluripotent states continuing through preimplantation development. Also involved in chromatin condensation in oocytogenesis. The chain is Developmental pluripotency-associated protein 3 (Dppa3) from Rattus norvegicus (Rat).